The sequence spans 578 residues: Probable acyl-activating enzyme 12, peroxisomal (578 aa).

A Microbody targeting signal motif is present at residues 576 to 578; that stretch reads SRL.

This sequence belongs to the ATP-dependent AMP-binding enzyme family. As to expression, expressed at low levels in leaves.

The protein localises to the peroxisome. May act as an acid--thiol ligase that activates carboxylic acids by forming acyl-CoAs. The sequence is that of Probable acyl-activating enzyme 12, peroxisomal (AAE12) from Arabidopsis thaliana (Mouse-ear cress).